Reading from the N-terminus, the 259-residue chain is Dihydroorotate dehydrogenase B (NAD(+)), electron transfer subunit (259 aa).

An FAD-binding FR-type domain is found at 2 to 102 (MQKQNMIVVN…LGPLGHGFPV (101 aa)). Residues 53 to 56 (RPIS), 70 to 72 (LYR), and 77 to 78 (GT) contribute to the FAD site. [2Fe-2S] cluster-binding residues include Cys221, Cys226, Cys229, and Cys246.

The protein belongs to the PyrK family. Heterotetramer of 2 PyrK and 2 PyrD type B subunits. It depends on [2Fe-2S] cluster as a cofactor. FAD is required as a cofactor.

The protein operates within pyrimidine metabolism; UMP biosynthesis via de novo pathway; orotate from (S)-dihydroorotate (NAD(+) route): step 1/1. Its function is as follows. Responsible for channeling the electrons from the oxidation of dihydroorotate from the FMN redox center in the PyrD type B subunit to the ultimate electron acceptor NAD(+). The polypeptide is Dihydroorotate dehydrogenase B (NAD(+)), electron transfer subunit (Bacillus cereus (strain 03BB102)).